The chain runs to 258 residues: UPF0246 protein ABO_1338 (258 aa).

This sequence belongs to the UPF0246 family.

This chain is UPF0246 protein ABO_1338, found in Alcanivorax borkumensis (strain ATCC 700651 / DSM 11573 / NCIMB 13689 / SK2).